A 105-amino-acid polypeptide reads, in one-letter code: Small ribosomal subunit protein uS10 (105 aa).

It belongs to the universal ribosomal protein uS10 family. In terms of assembly, part of the 30S ribosomal subunit.

Its function is as follows. Involved in the binding of tRNA to the ribosomes. This is Small ribosomal subunit protein uS10 from Lachnoclostridium phytofermentans (strain ATCC 700394 / DSM 18823 / ISDg) (Clostridium phytofermentans).